Here is a 180-residue protein sequence, read N- to C-terminus: Calcineurin subunit B type 1 (180 aa).

A lipid anchor (N-myristoyl glycine) is attached at G2. EF-hand domains are found at residues 25–60, 62–92, 94–129, and 135–170; these read AELK…ALNP, LERV…LSHK, TKED…MVGT, and QLQQ…QEGI. Ca(2+)-binding residues include D38, D40, S42, T44, E49, D70, N72, D74, E76, E81, D107, D109, D111, and E118. The tract at residues 138–143 is canA/calcineurin A binding; it reads QIVDKT. D148, D150, D152, K154, and E159 together coordinate Ca(2+).

This sequence belongs to the calcineurin regulatory subunit family. As to quaternary structure, forms a complex composed of a calmodulin-dependent catalytic subunit canA (also known as calcineurin A) and a regulatory Ca(2+)-binding subunit cnbA (also known as calcineurin B).

In terms of biological role, regulatory subunit of calcineurin, a calcium-dependent, calmodulin stimulated protein phosphatase. Confers calcium sensitivity. Important for stalk formation. The sequence is that of Calcineurin subunit B type 1 (cnbA) from Dictyostelium discoideum (Social amoeba).